Reading from the N-terminus, the 264-residue chain is uncharacterized protein (264 aa).

Composition is skewed to polar residues over residues 1-18, 73-83, and 126-139; these read MFEN…SSRS, SLGSVGTTEVN, and KTTQ…QPVL. Disordered regions lie at residues 1–47 and 68–264; these read MFEN…WVGS and RKEP…LSFE. Residues 149 to 171 show a composition bias toward low complexity; the sequence is SSGQPQVSSSAQPSPADASQPEA. The span at 194–212 shows a compositional bias: basic and acidic residues; the sequence is LIHKDGQDDPKLKVTECRR. Phosphoserine occurs at positions 214, 215, 241, and 250.

This is an uncharacterized protein from Bos taurus (Bovine).